The sequence spans 465 residues: uncharacterized protein (465 aa).

Residues 1-15 (MEKNYIFENSIYKDE) show a composition bias toward basic and acidic residues. Disordered stretches follow at residues 1–31 (MEKN…NNSS) and 288–320 (QLEK…EQLP).

This is an uncharacterized protein from Dictyostelium discoideum (Social amoeba).